Consider the following 187-residue polypeptide: UPF0301 protein ECA3925 (187 aa).

It belongs to the UPF0301 (AlgH) family.

This is UPF0301 protein ECA3925 from Pectobacterium atrosepticum (strain SCRI 1043 / ATCC BAA-672) (Erwinia carotovora subsp. atroseptica).